The sequence spans 314 residues: MSVKPLVVSIMGPTASGKTAAALAVAEKIPAEIISVDSALVYREMDIGTAKPSAEELAQVPHHLIDILDPLDSYSVMQFRQDAIRLAAEISARGKLPLLVGGTMLYFKGLKDGLDALPQADAALRAELDAEAAAIGYPAMHAKLAALDPITAERLKPNDSQRIQRALEIIALTGQPMSALLAQAPKTELPFTLLPIALEPSDRSVLHTRIATRFDAMLKGGALLDEVKALRARGDLHLGLPSMRCVGYRQSWEYLDGAYSLAELRERGIAATRQLAKRQLTWLRSMDDRHIIDCLAPDASGAILQQIEIAQNRA.

12-19 (GPTASGKT) contributes to the ATP binding site. Residue 14 to 19 (TASGKT) coordinates substrate. Interaction with substrate tRNA stretches follow at residues 37 to 40 (DSAL), 161 to 165 (QRIQR), and 244 to 249 (RCVGYR).

This sequence belongs to the IPP transferase family. Monomer. The cofactor is Mg(2+).

The enzyme catalyses adenosine(37) in tRNA + dimethylallyl diphosphate = N(6)-dimethylallyladenosine(37) in tRNA + diphosphate. Functionally, catalyzes the transfer of a dimethylallyl group onto the adenine at position 37 in tRNAs that read codons beginning with uridine, leading to the formation of N6-(dimethylallyl)adenosine (i(6)A). This Janthinobacterium sp. (strain Marseille) (Minibacterium massiliensis) protein is tRNA dimethylallyltransferase.